The following is a 72-amino-acid chain: Protein RALF-like 11 (72 aa).

A signal peptide spans 1–17 (MKAWLICLLVICAAVIA). Cystine bridges form between Cys34–Cys43 and Cys63–Cys69.

Belongs to the plant rapid alkalinization factor (RALF) family.

Its subcellular location is the secreted. In terms of biological role, cell signaling peptide that may regulate plant stress, growth, and development. Mediates a rapid alkalinization of extracellular space by mediating a transient increase in the cytoplasmic Ca(2+) concentration leading to a calcium-dependent signaling events through a cell surface receptor and a concomitant activation of some intracellular mitogen-activated protein kinases. In Arabidopsis thaliana (Mouse-ear cress), this protein is Protein RALF-like 11 (RALFL11).